Consider the following 123-residue polypeptide: Small ribosomal subunit protein uS12 (123 aa).

Residues 1–25 (MPTINQLIRKRRKSSLARKKSPALQ) are disordered. Positions 8-21 (IRKRRKSSLARKKS) are enriched in basic residues. 3-methylthioaspartic acid is present on Asp-89.

This sequence belongs to the universal ribosomal protein uS12 family. In terms of assembly, part of the 30S ribosomal subunit. Contacts proteins S8 and S17. May interact with IF1 in the 30S initiation complex.

Functionally, with S4 and S5 plays an important role in translational accuracy. In terms of biological role, interacts with and stabilizes bases of the 16S rRNA that are involved in tRNA selection in the A site and with the mRNA backbone. Located at the interface of the 30S and 50S subunits, it traverses the body of the 30S subunit contacting proteins on the other side and probably holding the rRNA structure together. The combined cluster of proteins S8, S12 and S17 appears to hold together the shoulder and platform of the 30S subunit. The polypeptide is Small ribosomal subunit protein uS12 (Chlamydia pneumoniae (Chlamydophila pneumoniae)).